The chain runs to 501 residues: Putative glycogen synthase kinase-3 homolog (501 aa).

Residues 33–317 form the Protein kinase domain; it reads YTDAKVVGNG…PLMGCAHPFF (285 aa). ATP-binding positions include 39 to 47 and Lys-62; that span reads VGNGSFGVV. Asp-158 acts as the Proton acceptor in catalysis. Tyr-193 carries the post-translational modification Phosphotyrosine. Disordered stretches follow at residues 355-427 and 446-501; these read LLPR…HVAV and SYAV…EDEN. Basic and acidic residues predominate over residues 381–390; sequence ESPRKTEDSQ. Composition is skewed to acidic residues over residues 451–471 and 482–501; these read EDAE…DYDD and DDMD…EDEN.

The protein belongs to the protein kinase superfamily. CMGC Ser/Thr protein kinase family. GSK-3 subfamily. In terms of processing, phosphorylation on Tyr-193 is necessary for the activity.

It carries out the reaction L-seryl-[tau protein] + ATP = O-phospho-L-seryl-[tau protein] + ADP + H(+). The catalysed reaction is L-threonyl-[tau protein] + ATP = O-phospho-L-threonyl-[tau protein] + ADP + H(+). The polypeptide is Putative glycogen synthase kinase-3 homolog (gskt) (Drosophila melanogaster (Fruit fly)).